The sequence spans 494 residues: Ell-associated factor Eaf (494 aa).

The span at 119–138 (KTRSEVTNKPSLMSATNAPM) shows a compositional bias: polar residues. Disordered regions lie at residues 119–212 (KTRS…PAWH) and 243–494 (QANI…DDDD). Residues 139–156 (SNGAPVPSSAAAGTGSAG) are compositionally biased toward low complexity. The segment covering 159 to 178 (ENSTMRISSKTKVSTGSRRN) has biased composition (polar residues). Phosphoserine is present on S188. 2 stretches are compositionally biased toward polar residues: residues 243-256 (QANISGSSTGSSAG) and 280-306 (QQLTQRSSPPMQQQQHQNYGRGSNNYA). Residues 307–319 (QQQQQQQQQQLQQ) are compositionally biased toward low complexity. A compositionally biased stretch (polar residues) spans 320-332 (RASFSHSNHSNSM). Low complexity predominate over residues 344 to 373 (QTAQSMAQAAAALEQQIGGELSASSSSSES). The span at 374–389 (DSSDSDSGSDSDDSTE) shows a compositional bias: acidic residues. Low complexity predominate over residues 414 to 424 (HQQQQHMHQLP). A compositionally biased stretch (basic residues) spans 437-454 (SHHHHQQQQQSHHHHHHQ). Composition is skewed to low complexity over residues 455-464 (QQQQQQHQQS) and 475-488 (NDLLQNDLQLSSNS).

The protein belongs to the EAF family.

The protein resides in the nucleus. In terms of biological role, promotes transcriptional elongation by Su(Tpl)/ELL. Essential for development. This chain is Ell-associated factor Eaf, found in Drosophila virilis (Fruit fly).